We begin with the raw amino-acid sequence, 216 residues long: Octanoyltransferase (216 aa).

One can recognise a BPL/LPL catalytic domain in the interval 31 to 205; it reads STTRDEVWLV…ELVTLLDYEQ (175 aa). Residues 70-77, 137-139, and 150-152 each bind substrate; these read RGGQVTYH, SLG, and GLA. Cysteine 168 functions as the Acyl-thioester intermediate in the catalytic mechanism.

Belongs to the LipB family.

It localises to the cytoplasm. It catalyses the reaction octanoyl-[ACP] + L-lysyl-[protein] = N(6)-octanoyl-L-lysyl-[protein] + holo-[ACP] + H(+). It participates in protein modification; protein lipoylation via endogenous pathway; protein N(6)-(lipoyl)lysine from octanoyl-[acyl-carrier-protein]: step 1/2. Its function is as follows. Catalyzes the transfer of endogenously produced octanoic acid from octanoyl-acyl-carrier-protein onto the lipoyl domains of lipoate-dependent enzymes. Lipoyl-ACP can also act as a substrate although octanoyl-ACP is likely to be the physiological substrate. This Vibrio cholerae serotype O1 (strain ATCC 39541 / Classical Ogawa 395 / O395) protein is Octanoyltransferase.